We begin with the raw amino-acid sequence, 284 residues long: Deoxyribonuclease-1 (284 aa).

Residues 1–22 form the signal peptide; it reads MRYTGLMGILLTLVNLLQLAAT. N-linked (GlcNAc...) asparagine glycosylation occurs at asparagine 40. The active site involves glutamate 100. A disulfide bond links cysteine 123 and cysteine 126. N-linked (GlcNAc...) asparagine glycosylation is present at asparagine 128. Residue histidine 156 is part of the active site. A disulfide bond links cysteine 195 and cysteine 231.

The protein belongs to the DNase I family. Ca(2+) serves as cofactor. Requires Mg(2+) as cofactor.

The protein resides in the secreted. Its subcellular location is the zymogen granule. It localises to the nucleus envelope. The enzyme catalyses Endonucleolytic cleavage to 5'-phosphodinucleotide and 5'-phosphooligonucleotide end-products.. In terms of biological role, serum endocuclease secreted into body fluids by a wide variety of exocrine and endocrine organs. Expressed by non-hematopoietic tissues and preferentially cleaves protein-free DNA. Among other functions, seems to be involved in cell death by apoptosis. Binds specifically to G-actin and blocks actin polymerization. Together with DNASE1L3, plays a key role in degrading neutrophil extracellular traps (NETs). NETs are mainly composed of DNA fibers and are released by neutrophils to bind pathogens during inflammation. Degradation of intravascular NETs by DNASE1 and DNASE1L3 is required to prevent formation of clots that obstruct blood vessels and cause organ damage following inflammation. In Rattus norvegicus (Rat), this protein is Deoxyribonuclease-1 (Dnase1).